A 236-amino-acid polypeptide reads, in one-letter code: Ribonuclease P protein component 3 (236 aa).

Belongs to the eukaryotic/archaeal RNase P protein component 3 family. Consists of a catalytic RNA component and at least 4-5 protein subunits.

The protein resides in the cytoplasm. It catalyses the reaction Endonucleolytic cleavage of RNA, removing 5'-extranucleotides from tRNA precursor.. In terms of biological role, part of ribonuclease P, a protein complex that generates mature tRNA molecules by cleaving their 5'-ends. The chain is Ribonuclease P protein component 3 from Natronomonas pharaonis (strain ATCC 35678 / DSM 2160 / CIP 103997 / JCM 8858 / NBRC 14720 / NCIMB 2260 / Gabara) (Halobacterium pharaonis).